A 360-amino-acid chain; its full sequence is 45 kDa calcium-binding protein (360 aa).

Residues 1–29 (MVSKQAFLFSLGSLYLSLLFIFLLMDVYA) form the signal peptide. Residue N33 is glycosylated (N-linked (GlcNAc...) asparagine). EF-hand domains lie at 96-131 (RNRR…KTEE), 135-170 (EAVN…SKGF), 231-266 (MLKF…TVEN), 276-311 (WVRD…MNEY), and 312-347 (NALN…FTGS). Residues D109, N111, D113, Q115, E120, D148, D150, D152, H154, E159, D244, D246, D248, K250, E255, D289, N291, D293, E300, D325, N327, D329, and E336 each coordinate Ca(2+).

It belongs to the CREC family.

Its subcellular location is the golgi apparatus lumen. Functionally, may regulate calcium-dependent activities in the endoplasmic reticulum lumen or post-ER compartment. This is 45 kDa calcium-binding protein (sdf4) from Xenopus laevis (African clawed frog).